A 996-amino-acid chain; its full sequence is Disabled homolog 2-interacting protein (996 aa).

In terms of domain architecture, C2 spans 1 to 118 (MENLRRAVHP…AGRQFVEKWY (118 aa)). The Ras-GAP domain occupies 194-402 (GKVKDFLTDL…TNMQRFLLEI (209 aa)). The segment at 453 to 750 (LRDVHTALST…RTPPTMLSTL (298 aa)) is necessary for interaction with AKT1. The span at 460-475 (LSTPGSGQLPGTNDLA) shows a compositional bias: polar residues. 2 disordered regions span residues 460-486 (LSTPGSGQLPGTNDLASTPGSGSSSVS) and 522-545 (RSSGVQPSPARSSSYSEANEPDLQ). Low complexity predominate over residues 476–486 (STPGSGSSSVS). Polar residues predominate over residues 522–538 (RSSGVQPSPARSSSYSE). The residue at position 535 (S535) is a Phosphoserine; by MAP3K5 and RIPK1. S554 bears the Phosphoserine mark. Disordered regions lie at residues 611–630 (VPTPTTPGTSEGAPGRPQLL), 650–672 (PRGLGDSGSEGHSSLSSHSNSEE), 702–805 (SLTE…SPNA), 822–841 (EDEGLGPDPPHRDRLRSKEE), and 971–996 (RNGVSPTNPTKLQITENGEFRNSSNC). The span at 659–672 (EGHSSLSSHSNSEE) shows a compositional bias: low complexity. Positions 726-738 (QPPPPPPPPPPAP) are enriched in pro residues. 2 stretches are compositionally biased toward polar residues: residues 746-762 (MLSTLQYPRPSSGTLAS) and 774-783 (LRQQSSSSKG). 2 positions are modified to phosphoserine: S785 and S802. The span at 830–841 (PPHRDRLRSKEE) shows a compositional bias: basic and acidic residues. The stretch at 832–966 (HRDRLRSKEE…SALTQLKERY (135 aa)) forms a coiled coil. The segment covering 974 to 996 (VSPTNPTKLQITENGEFRNSSNC) has biased composition (polar residues).

As to quaternary structure, on plasma membrane, exists in an inactive form complexed with TNFR1; in response to TNF-alpha, dissociates from TNFR1 complex, translocates to cytoplasm and forms part of an intracellular signaling complex comprising TRADD, RIPK1, TRAF2 and MAP3K5. Interacts (via NPXY motif) with DAB2 (via PID domain). Interacts (via PH domain) with ERN1. Part of a cytoplasmic complex made of HIPK1, DAB2IP and MAP3K5 in response to TNF-alpha; this complex formation promotes MAP3K5-JNK activation and subsequent apoptosis. Interacts (via N-terminal domain) with JAK2; the interaction occurs in a IFNG/IFN-gamma-dependent manner and inhibits JAK2 autophosphorylation activity. Interacts (via C2 domain) with GSK3B; the interaction stimulates GSK3B kinase activation. Interacts (via C2 domain) with PPP2CA. Interacts (via proline-rich motif) with a regulatory p85 subunit (via SH3 domain) of the PI3K complex; the interaction inhibits the PI3K-AKT complex activity in a TNF-alpha-dependent manner in prostate cancer (PCa) cells. Interacts with AKT1; the interaction is increased in a TNF-alpha-induced manner. Interacts (via C2 domain and active form preferentially) with KDR/VEGFR2 (tyrosine-phosphorylated active form preferentially); the interaction occurs at the late phase of VEGFA response and inhibits KDR/VEGFR2 activity. Interacts (via N-terminus C2 domain) with MAP3K5 ('Ser-966' dephosphorylated form preferentially); the interaction occurs in a TNF-alpha-induced manner. Interacts (via Ras-GAP domain) with the catalytic subunit of protein phosphatase PP2A; the interaction occurs in resting endothelial cells, is further enhanced by TNF-alpha stimulation and is required to bridge PP2A to MAP3K5. Interacts (via C-terminus PER domain) with TRAF2 (via zinc fingers); the interaction occurs in a TNF-alpha-dependent manner. Interacts with 14-3-3 proteins; the interaction occurs in a TNF-alpha-dependent manner. Interacts (via Ras-GAP domain) with RIPK1 (via kinase domain); the interaction occurs in a TNF-alpha-dependent manner. Interacts with DAB1 and DAB2. Interacts with RAB40C; acts as a GAP for RAB40C. Post-translationally, in response to TNF-alpha-induction, phosphorylated at Ser-535; phosphorylation leads to a conformational change, and thus, increases its association with 14-3-3 proteins, MAP3K5, RIPK1 and TRAF2 in endothelial cells; also stimulates regulatory p85 subunit sequestring and PI3K-p85 complex activity inhibition. In terms of tissue distribution, expressed in brain, lung, thymus, bladder and skeletal muscle. Up-regulatedd during prostate degeneration.

The protein localises to the cytoplasm. Its subcellular location is the cell membrane. The protein resides in the membrane. It localises to the cell projection. It is found in the dendrite. Its function is as follows. Functions as a scaffold protein implicated in the regulation of a large spectrum of both general and specialized signaling pathways. Involved in several processes such as innate immune response, inflammation and cell growth inhibition, apoptosis, cell survival, angiogenesis, cell migration and maturation. Also plays a role in cell cycle checkpoint control; reduces G1 phase cyclin levels resulting in G0/G1 cell cycle arrest. Mediates signal transduction by receptor-mediated inflammatory signals, such as the tumor necrosis factor (TNF), interferon (IFN) or lipopolysaccharide (LPS). Modulates the balance between phosphatidylinositol 3-kinase (PI3K)-AKT-mediated cell survival and apoptosis stimulated kinase (MAP3K5)-JNK signaling pathways; sequesters both AKT1 and MAP3K5 and counterbalances the activity of each kinase by modulating their phosphorylation status in response to pro-inflammatory stimuli. Acts as a regulator of the endoplasmic reticulum (ER) unfolded protein response (UPR) pathway; specifically involved in transduction of the ER stress-response to the JNK cascade through ERN1. Mediates TNF-alpha-induced apoptosis activation by facilitating dissociation of inhibitor 14-3-3 from MAP3K5; recruits the PP2A phosphatase complex which dephosphorylates MAP3K5 on 'Ser-966', leading to the dissociation of 13-3-3 proteins and activation of the MAP3K5-JNK signaling pathway in endothelial cells. Acts a negative regulator in the IFN-gamma-mediated JAK-STAT signaling cascade by inhibiting smooth muscle cell (VSMCs) proliferation and intimal expansion, and thus, prevents graft arteriosclerosis (GA). Acts as a GTPase-activating protein (GAP) for the ADP ribosylation factor 6 (ARF6). Promotes hydrolysis of the ARF6-bound GTP and thus, negatively regulates phosphatidylinositol 4,5-bisphosphate (PIP2)-dependent TLR4-TIRAP-MyD88 and NF-kappa-B signaling pathways in endothelial cells in response to lipopolysaccharides (LPS). Binds specifically to phosphatidylinositol 4-phosphate (PtdIns4P) and phosphatidylinositol 3-phosphate (PtdIns3P). In response to vascular endothelial growth factor (VEGFA), acts as a negative regulator of the VEGFR2-PI3K-mediated angiogenic signaling pathway by inhibiting endothelial cell migration and tube formation. In the developing brain, promotes both the transition from the multipolar to the bipolar stage and the radial migration of cortical neurons from the ventricular zone toward the superficial layer of the neocortex in a glial-dependent locomotion process. Probable downstream effector of the Reelin signaling pathway; promotes Purkinje cell (PC) dendrites development and formation of cerebellar synapses. Also functions as a tumor suppressor protein in prostate cancer progression; prevents cell proliferation and epithelial-to-mesenchymal transition (EMT) through activation of the glycogen synthase kinase-3 beta (GSK3B)-induced beta-catenin and inhibition of PI3K-AKT and Ras-MAPK survival downstream signaling cascades, respectively. Mediates TNF/TRAF2-induced MAP3K5-JNK activation, while it inhibits CHUK-NF-kappa-B signaling. Functions as a Ras GTPase-activating protein. May act as a tumor suppressor gene. The protein is Disabled homolog 2-interacting protein (Dab2ip) of Rattus norvegicus (Rat).